We begin with the raw amino-acid sequence, 222 residues long: Germin-like protein subfamily 1 member 4 (222 aa).

An N-terminal signal peptide occupies residues 1 to 24; it reads MEGLLQFLLAKIILLALASSFVYC. A disulfide bond links Cys-34 and Cys-50. Asn-38 carries N-linked (GlcNAc...) asparagine glycosylation. Positions 64 to 215 constitute a Cupin type-1 domain; sequence SGLNVPGNTI…AFALDYNKVK (152 aa). Mn(2+) is bound by residues His-112 and His-114. An N-linked (GlcNAc...) asparagine glycan is attached at Asn-139. Residue His-161 coordinates Mn(2+).

It belongs to the germin family. As to quaternary structure, oligomer (believed to be a pentamer but probably hexamer).

The protein resides in the secreted. It localises to the extracellular space. Its subcellular location is the apoplast. Functionally, may play a role in plant defense. Probably has no oxalate oxidase activity even if the active site is conserved. In Arabidopsis thaliana (Mouse-ear cress), this protein is Germin-like protein subfamily 1 member 4.